A 244-amino-acid polypeptide reads, in one-letter code: ATP synthase subunit a (244 aa).

A run of 7 helical transmembrane segments spans residues 17 to 37 (LSNV…AVLT), 74 to 94 (PFLA…MLGL), 112 to 132 (DPAI…YYGV), 148 to 168 (IPLL…TLGL), 171 to 191 (YGNI…ATNF), 196 to 216 (IALG…WQAF), and 217 to 237 (SLFV…VYIS).

This sequence belongs to the ATPase A chain family. As to quaternary structure, F-type ATPases have 2 components, CF(1) - the catalytic core - and CF(0) - the membrane proton channel. CF(1) has five subunits: alpha(3), beta(3), gamma(1), delta(1), epsilon(1). CF(0) has three main subunits: a(1), b(2) and c(9-12). The alpha and beta chains form an alternating ring which encloses part of the gamma chain. CF(1) is attached to CF(0) by a central stalk formed by the gamma and epsilon chains, while a peripheral stalk is formed by the delta and b chains.

The protein resides in the cell membrane. In terms of biological role, key component of the proton channel; it plays a direct role in the translocation of protons across the membrane. This Bacillus pumilus (strain SAFR-032) protein is ATP synthase subunit a.